A 190-amino-acid polypeptide reads, in one-letter code: DNA dC-&gt;dU-editing enzyme APOBEC-3C (190 aa).

The CMP/dCMP-type deaminase domain occupies 29-138 (DRNETWLCFT…TDYQEGLRSL (110 aa)). 3 residues coordinate Zn(2+): His-66, Cys-97, and Cys-100.

Belongs to the cytidine and deoxycytidylate deaminase family. In terms of assembly, homodimer. Interacts with TRIB3. Zn(2+) is required as a cofactor.

Its subcellular location is the nucleus. The protein resides in the cytoplasm. It carries out the reaction a 2'-deoxycytidine in single-stranded DNA + H2O + H(+) = a 2'-deoxyuridine in single-stranded DNA + NH4(+). In terms of biological role, DNA deaminase (cytidine deaminase) which acts as an inhibitor of retrovirus replication and retrotransposon mobility via deaminase-dependent and -independent mechanisms. May also play a role in the epigenetic regulation of gene expression through the process of active DNA demethylation. This Gorilla gorilla gorilla (Western lowland gorilla) protein is DNA dC-&gt;dU-editing enzyme APOBEC-3C (APOBEC3C).